Here is a 432-residue protein sequence, read N- to C-terminus: Lipid-A-disaccharide synthase (432 aa).

Residues 1-11 show a composition bias toward polar residues; the sequence is MTGIGNQTSGI. A disordered region spans residues 1–35; the sequence is MTGIGNQTSGIETGVHDRAPADGEPTALPISHSPL.

It belongs to the LpxB family.

The catalysed reaction is a lipid X + a UDP-2-N,3-O-bis[(3R)-3-hydroxyacyl]-alpha-D-glucosamine = a lipid A disaccharide + UDP + H(+). The protein operates within bacterial outer membrane biogenesis; LPS lipid A biosynthesis. In terms of biological role, condensation of UDP-2,3-diacylglucosamine and 2,3-diacylglucosamine-1-phosphate to form lipid A disaccharide, a precursor of lipid A, a phosphorylated glycolipid that anchors the lipopolysaccharide to the outer membrane of the cell. The protein is Lipid-A-disaccharide synthase of Xanthomonas oryzae pv. oryzae (strain MAFF 311018).